The chain runs to 934 residues: Protein translocase subunit SecA (934 aa).

Residues Gln-87, 105-109 (GEGKT), and Asp-515 contribute to the ATP site. Zn(2+) is bound by residues Cys-918, Cys-920, Cys-929, and His-930.

Belongs to the SecA family. As to quaternary structure, monomer and homodimer. Part of the essential Sec protein translocation apparatus which comprises SecA, SecYEG and auxiliary proteins SecDF-YajC and YidC. It depends on Zn(2+) as a cofactor.

It is found in the cell inner membrane. It localises to the cytoplasm. It catalyses the reaction ATP + H2O + cellular proteinSide 1 = ADP + phosphate + cellular proteinSide 2.. Part of the Sec protein translocase complex. Interacts with the SecYEG preprotein conducting channel. Has a central role in coupling the hydrolysis of ATP to the transfer of proteins into and across the cell membrane, serving both as a receptor for the preprotein-SecB complex and as an ATP-driven molecular motor driving the stepwise translocation of polypeptide chains across the membrane. This chain is Protein translocase subunit SecA, found in Ralstonia nicotianae (strain ATCC BAA-1114 / GMI1000) (Ralstonia solanacearum).